The sequence spans 395 residues: Putative pyridoxal phosphate-dependent acyltransferase (395 aa).

110 to 111 (GF) lines the pyridoxal 5'-phosphate pocket. H135 lines the substrate pocket. Pyridoxal 5'-phosphate-binding positions include S185, 210–213 (DDAH), and 240–243 (TLSK). Residue K243 is modified to N6-(pyridoxal phosphate)lysine. T357 is a binding site for substrate.

This sequence belongs to the class-II pyridoxal-phosphate-dependent aminotransferase family. Homodimer. It depends on pyridoxal 5'-phosphate as a cofactor.

The polypeptide is Putative pyridoxal phosphate-dependent acyltransferase (Staphylococcus aureus (strain COL)).